Reading from the N-terminus, the 366-residue chain is Ribosomal RNA large subunit methyltransferase M (366 aa).

S-adenosyl-L-methionine-binding positions include serine 187, 220–223 (SPGG), aspartate 239, aspartate 259, and aspartate 276. The Proton acceptor role is filled by lysine 305.

This sequence belongs to the class I-like SAM-binding methyltransferase superfamily. RNA methyltransferase RlmE family. RlmM subfamily. In terms of assembly, monomer.

It is found in the cytoplasm. The enzyme catalyses cytidine(2498) in 23S rRNA + S-adenosyl-L-methionine = 2'-O-methylcytidine(2498) in 23S rRNA + S-adenosyl-L-homocysteine + H(+). Its function is as follows. Catalyzes the 2'-O-methylation at nucleotide C2498 in 23S rRNA. This Tolumonas auensis (strain DSM 9187 / NBRC 110442 / TA 4) protein is Ribosomal RNA large subunit methyltransferase M.